A 720-amino-acid chain; its full sequence is Long chain acyl-CoA synthetase 8 (720 aa).

Met1 is subject to N-acetylmethionine. 279–290 (IMFTSGSTGLPK) is a binding site for ATP. A fatty acid-binding region spans residues 554–582 (DEKGTRWFYTGDIGRFHPDGCLEVIDRKK).

It belongs to the ATP-dependent AMP-binding enzyme family. The cofactor is Mg(2+).

It catalyses the reaction a long-chain fatty acid + ATP + CoA = a long-chain fatty acyl-CoA + AMP + diphosphate. It functions in the pathway lipid metabolism; fatty acid metabolism. Functionally, activation of long-chain fatty acids for both synthesis of cellular lipids, and degradation via beta-oxidation. Preferentially uses palmitate, palmitoleate, oleate and linoleate. In Arabidopsis thaliana (Mouse-ear cress), this protein is Long chain acyl-CoA synthetase 8 (LACS8).